Here is a 322-residue protein sequence, read N- to C-terminus: CXXC-type zinc finger protein 5 (322 aa).

Residues 1–10 are compositionally biased toward gly residues; it reads MSSLGGGSQD. Positions 1–100 are disordered; the sequence is MSSLGGGSQD…SGGGSMMGGE (100 aa). Composition is skewed to low complexity over residues 11–20 and 28–52; these read AGGSSSSSTN and SGPK…VADD. The residue at position 53 (T53) is a Phosphothreonine. The span at 87–97 shows a compositional bias: gly residues; sequence SSGGSGGGSMM. The CXXC-type zinc-finger motif lies at 256–297; the sequence is GKKKRKRCGMCAPCRRRINCEQCSSCRNRKTGHQICKFRKCE. Residues 257–262 carry the Nuclear localization signal motif; sequence KKKRKR. Residues C263, C266, C269, C275, C278, C281, C291, and C296 each coordinate Zn(2+).

As to quaternary structure, interacts with DVL1. Interacts with RBPJ.

The protein resides in the nucleus. It localises to the cytoplasm. Its function is as follows. May indirectly participate in activation of the NF-kappa-B and MAPK pathways. Acts as a mediator of BMP4-mediated modulation of canonical Wnt signaling activity in neural stem cells. Required for DNA damage-induced ATM phosphorylation, p53 activation and cell cycle arrest. Involved in myelopoiesis. Binds to the oxygen responsive element of COX4I2 and represses its transcription under hypoxia conditions (4% oxygen), as well as normoxia conditions (20% oxygen). May repress COX4I2 transactivation induced by CHCHD2 and RBPJ. Binds preferentially to DNA containing cytidine-phosphate-guanosine (CpG) dinucleotides over CpH (H=A, T, and C), hemimethylated-CpG and hemimethylated-hydroxymethyl-CpG. The sequence is that of CXXC-type zinc finger protein 5 (CXXC5) from Pongo abelii (Sumatran orangutan).